The primary structure comprises 327 residues: Olfactory receptor 6A2 (327 aa).

Topologically, residues 1 to 26 (MEWRNHSGRVSEFVLLGFPAPAPLQV) are extracellular. An N-linked (GlcNAc...) asparagine glycan is attached at Asn-5. The helical transmembrane segment at 27 to 47 (LLFALLLLAYVLVLTENTLII) threads the bilayer. The Cytoplasmic segment spans residues 48-55 (MAIRNHST). A helical transmembrane segment spans residues 56 to 76 (LHKPMYFFLANMSFLEIWYVT). Over 77–104 (VTIPKMLAGFVGSKQDHGQLISFEGCMT) the chain is Extracellular. Cys-102 and Cys-194 are oxidised to a cystine. Residues 105–125 (QLYFFLGLGCTECVLLAVMAY) traverse the membrane as a helical segment. The Cytoplasmic portion of the chain corresponds to 126-144 (DRYMAICYPLHYPVIVSGR). A helical membrane pass occupies residues 145 to 165 (LCVQMAAGSWAGGFGISMVKV). Residues 166 to 201 (FLISGLSYCGPNIINHFFCDVSPLLNLSCTDMSTAE) lie on the Extracellular side of the membrane. Asn-191 carries an N-linked (GlcNAc...) asparagine glycan. Residues 202 to 222 (LTDFILAIFILLGPLSVTGAS) traverse the membrane as a helical segment. Over 223 to 242 (YVAITGAVMHIPSAAGRYKA) the chain is Cytoplasmic. The helical transmembrane segment at 243–263 (FSTCASHLTVVIIFYAASIFI) threads the bilayer. The Extracellular segment spans residues 264–276 (YARPKALSAFDTN). Residues 277-297 (KLVSVLYAVIVPLLNPIIYCL) form a helical membrane-spanning segment. The Cytoplasmic portion of the chain corresponds to 298-327 (RNQEVKRALCCTLHLYQHQDPDPKKASRNV).

The protein belongs to the G-protein coupled receptor 1 family.

It is found in the cell membrane. Odorant receptor. This Homo sapiens (Human) protein is Olfactory receptor 6A2 (OR6A2).